Consider the following 281-residue polypeptide: Tetraspanin-5 (281 aa).

Over 1-7 (MNRMSNT) the chain is Cytoplasmic. Residues 8-28 (VIGFLNILTLISSIVLLGSAL) form a helical membrane-spanning segment. Residues 29–44 (WMGRSKTTCEHFLQKP) are Extracellular-facing. Residues 45–65 (LLILGLAILILSVAGLVGACC) traverse the membrane as a helical segment. Residues 66–74 (DVAWVLWVY) lie on the Cytoplasmic side of the membrane. Residues 75 to 95 (LFFMVFIIVALMGLTLFGFIV) form a helical membrane-spanning segment. The Extracellular segment spans residues 96–221 (TSHSGGVVVD…TVRRDWHKLS (126 aa)). The chain crosses the membrane as a helical span at residues 222 to 242 (LVNVIVVIFLIAVYCVGCCAF). Residues 243 to 281 (KNAKRPQHYGFPYGRYGMSKSRPGWEQSWSRWWHGRDRY) lie on the Cytoplasmic side of the membrane.

The protein belongs to the tetraspanin (TM4SF) family.

Its subcellular location is the membrane. Its function is as follows. May be involved in the regulation of cell differentiation. The chain is Tetraspanin-5 (TET5) from Arabidopsis thaliana (Mouse-ear cress).